Here is a 122-residue protein sequence, read N- to C-terminus: MIQMQTNLDVADNSGARRVMCIKVLGGSKRKYASVGDIIVVSVKDVIPRGRVKKGDVMKAVVVRTAKDIRRADGSVIRFDRNAAVLVDNKKEPIGTRIFGPVPRELRGKNHMKIVSLAPEVL.

It belongs to the universal ribosomal protein uL14 family. In terms of assembly, part of the 50S ribosomal subunit. Forms a cluster with proteins L3 and L19. In the 70S ribosome, L14 and L19 interact and together make contacts with the 16S rRNA in bridges B5 and B8.

Functionally, binds to 23S rRNA. Forms part of two intersubunit bridges in the 70S ribosome. The polypeptide is Large ribosomal subunit protein uL14 (Bartonella bacilliformis (strain ATCC 35685 / KC583 / Herrer 020/F12,63)).